A 257-amino-acid chain; its full sequence is Glutamate racemase (257 aa).

Residues 12–13 (DS) and 44–45 (YG) each bind substrate. Cys-75 acts as the Proton donor/acceptor in catalysis. Residue 76–77 (NT) participates in substrate binding. The active-site Proton donor/acceptor is the Cys-186. Residue 187–188 (TH) coordinates substrate.

Belongs to the aspartate/glutamate racemases family.

The catalysed reaction is L-glutamate = D-glutamate. It functions in the pathway cell wall biogenesis; peptidoglycan biosynthesis. In terms of biological role, provides the (R)-glutamate required for cell wall biosynthesis. This is Glutamate racemase from Clostridium kluyveri (strain NBRC 12016).